The chain runs to 68 residues: Beta-defensin 1 (68 aa).

Residues 1-21 (MRTSYLLLFTLCLLLSEMASG) form the signal peptide. Positions 22–32 (GNFLTGLGHRS) are excised as a propeptide. Intrachain disulfides connect Cys37-Cys66, Cys44-Cys59, and Cys49-Cys67.

This sequence belongs to the beta-defensin family. In terms of assembly, monomer. Homodimer.

It localises to the secreted. The protein resides in the membrane. Has bactericidal activity. May act as a ligand for C-C chemokine receptor CCR6. Positively regulates the sperm motility and bactericidal activity in a CCR6-dependent manner. Binds to CCR6 and triggers Ca2+ mobilization in the sperm which is important for its motility. The polypeptide is Beta-defensin 1 (DEFB1) (Pongo pygmaeus (Bornean orangutan)).